The following is a 242-amino-acid chain: 4-hydroxy-tetrahydrodipicolinate reductase (242 aa).

NAD(+) is bound by residues 8–13, 75–77, and 99–102; these read GAKGRM, GTT, and ATNM. His131 serves as the catalytic Proton donor/acceptor. His132 contributes to the (S)-2,3,4,5-tetrahydrodipicolinate binding site. Lys135 (proton donor) is an active-site residue. Residue 141–142 participates in (S)-2,3,4,5-tetrahydrodipicolinate binding; it reads GT.

It belongs to the DapB family.

The protein localises to the cytoplasm. The catalysed reaction is (S)-2,3,4,5-tetrahydrodipicolinate + NAD(+) + H2O = (2S,4S)-4-hydroxy-2,3,4,5-tetrahydrodipicolinate + NADH + H(+). It catalyses the reaction (S)-2,3,4,5-tetrahydrodipicolinate + NADP(+) + H2O = (2S,4S)-4-hydroxy-2,3,4,5-tetrahydrodipicolinate + NADPH + H(+). The protein operates within amino-acid biosynthesis; L-lysine biosynthesis via DAP pathway; (S)-tetrahydrodipicolinate from L-aspartate: step 4/4. Catalyzes the conversion of 4-hydroxy-tetrahydrodipicolinate (HTPA) to tetrahydrodipicolinate. The protein is 4-hydroxy-tetrahydrodipicolinate reductase of Campylobacter jejuni subsp. jejuni serotype O:2 (strain ATCC 700819 / NCTC 11168).